Consider the following 421-residue polypeptide: MKKPSKKSEIEFCTVCRFHHDQGSRHKYFPRHKSSLSSLLDRFRSKIADVRFFLKNPSVLRPQEQSQNRVWCVFCDEDIVELGSSFACSKAINHFASSDHLKNIKQFLSKNGPAMDCIDEFRISEADVAKWEKKCQSFGNEDASFEGSCGQLSGTSNDIHTKLAFETMDRIKKVPAHHINSYKSNDVMPLQYNTNEYQISLSEIPGVIHNGSYLNMDDSQFPLCDESGNGFGEHSIPCRSKDYSGNGNYCTQENYQVSQDKKQIDGSYNPPGVVGMTSISSSHSTDAGGNVHSGAPPPWLDANDGDFSSVQLNQSDVARFQAKVPGKNRKLNPNRVGAAWAERRKIEIEMEKSGHVTKSNIDPDWLPNFGRVWQSGTRKESRKEFEKEKRKLVKTESISTESEPVKIQPYISKRARRESGE.

The C2H2-type 1; degenerate zinc finger occupies 11–32 (EFCTVCRFHHDQGSRHKYFPRH). The C2H2-type 2; degenerate zinc-finger motif lies at 70–100 (VWCVFCDEDIVELGSSFACSKAINHFASSDH). The tract at residues 279–306 (ISSSHSTDAGGNVHSGAPPPWLDANDGD) is disordered. 2 short sequence motifs (nuclear localization signal) span residues 328–335 (NRKLNPNR) and 377–384 (TRKESRKE). Positions 376 to 421 (GTRKESRKEFEKEKRKLVKTESISTESEPVKIQPYISKRARRESGE) are disordered. The segment covering 377-389 (TRKESRKEFEKEK) has biased composition (basic and acidic residues).

Also present in cotyledons, hypocotyls, stems, veins of sepals and stigmas, and actively dividing tissues such as shoot apical meristem, root tips and emerging true leaves. Weak expression in petals and anthers, and not detected in mature leaves. In seeds, expressed in both the endosperm and embryo.

The protein resides in the nucleus. Key regulator for endosperm and embryo nuclear divisions. The protein is TITAN-like protein of Arabidopsis thaliana (Mouse-ear cress).